A 510-amino-acid polypeptide reads, in one-letter code: Protein disulfide-isomerase (510 aa).

The signal sequence occupies residues 1 to 20 (MLRRALLCLALTALFRAGAG). Residues 27 to 136 (HVLVLHKGNF…IVNWLKKRTG (110 aa)) enclose the Thioredoxin 1 domain. Active-site nucleophile residues include Cys-55 and Cys-58. Cys-55 and Cys-58 are joined by a disulfide. Position 202 is an N6-acetyllysine (Lys-202). An N6-succinyllysine mark is found at Lys-224 and Lys-273. Ser-333 and Ser-359 each carry phosphoserine. The Thioredoxin 2 domain maps to 351–477 (GKIKPHLMSQ…FKKFLESGGQ (127 aa)). Residues Cys-399 and Cys-402 each act as nucleophile in the active site. Residues Cys-399 and Cys-402 are joined by a disulfide bond. The residue at position 429 (Ser-429) is a Phosphoserine. The interval 473–510 (ESGGQDGAGDDDDLEDLEEAEEPDLEEDDDQKAVKDEL) is disordered. Positions 480–502 (AGDDDDLEDLEEAEEPDLEEDDD) are enriched in acidic residues. The short motif at 507–510 (KDEL) is the Prevents secretion from ER element.

It belongs to the protein disulfide isomerase family. As to quaternary structure, heterodimer; heterodimerizes with the protein microsomal triglyceride transfer MTTP. Homodimer. Monomers and homotetramers may also occur. Interacts with P4HA2, forming a heterotetramer consisting of 2 alpha subunits (P4HA2) and 2 beta (P4HB), where P4HB plays the role of a structural subunit; this tetramer catalyzes the formation of 4-hydroxyproline in collagen. Also constitutes the structural subunit of the microsomal triacylglycerol transfer protein MTTP in mammalian cells. Stabilizes both enzymes and retain them in the ER without contributing to the catalytic activity. Binds UBQLN1. Interacts with ERO1B. Interacts with ILDR2. Interacts with ERN1/IRE1A (via N-terminus); the interaction is enhanced by phosphorylation of P4HB by FAM20C in response to endoplasmic reticulum stress and results in attenuation of ERN1 activity. In terms of processing, phosphorylation of Ser-359 by FAM20C is induced by endoplasmic reticulum stress and results in a functional switch from oxidoreductase to molecular chaperone. It also promotes interaction with ERN1.

It localises to the endoplasmic reticulum. The protein resides in the endoplasmic reticulum lumen. It is found in the melanosome. Its subcellular location is the cell membrane. The catalysed reaction is Catalyzes the rearrangement of -S-S- bonds in proteins.. Functionally, this multifunctional protein catalyzes the formation, breakage and rearrangement of disulfide bonds. At the cell surface, seems to act as a reductase that cleaves disulfide bonds of proteins attached to the cell. May therefore cause structural modifications of exofacial proteins. Inside the cell, seems to form/rearrange disulfide bonds of nascent proteins. At high concentrations and following phosphorylation by FAM20C, functions as a chaperone that inhibits aggregation of misfolded proteins. At low concentrations, facilitates aggregation (anti-chaperone activity). May be involved with other chaperones in the structural modification of the TG precursor in hormone biogenesis. Also acts as a structural subunit of various enzymes such as prolyl 4-hydroxylase and microsomal triacylglycerol transfer protein MTTP. Receptor for LGALS9; the interaction retains P4HB at the cell surface of Th2 T helper cells, increasing disulfide reductase activity at the plasma membrane, altering the plasma membrane redox state and enhancing cell migration. This Bos taurus (Bovine) protein is Protein disulfide-isomerase (P4HB).